The sequence spans 130 residues: Small ribosomal subunit protein uS9 (130 aa).

Belongs to the universal ribosomal protein uS9 family.

This chain is Small ribosomal subunit protein uS9, found in Anoxybacillus flavithermus (strain DSM 21510 / WK1).